The sequence spans 25 residues: Caerin-1.17 (25 aa).

Leu-25 is modified (leucine amide).

It belongs to the frog skin active peptide (FSAP) family. Caerin subfamily. As to expression, expressed by the skin dorsal glands.

The protein resides in the secreted. Functionally, caerin-1.17 shows significant activity against Gram-positive organisms, but is less effective against Gram-negative organisms. The polypeptide is Caerin-1.17 (Ranoidea gracilenta (Dainty green tree frog)).